The chain runs to 530 residues: Bifunctional purine biosynthesis protein PurH (530 aa).

Residues 1–148 form the MGS-like domain; that stretch reads MNNARPIRRA…KNHKDVTIVV (148 aa).

It belongs to the PurH family.

It catalyses the reaction (6R)-10-formyltetrahydrofolate + 5-amino-1-(5-phospho-beta-D-ribosyl)imidazole-4-carboxamide = 5-formamido-1-(5-phospho-D-ribosyl)imidazole-4-carboxamide + (6S)-5,6,7,8-tetrahydrofolate. The enzyme catalyses IMP + H2O = 5-formamido-1-(5-phospho-D-ribosyl)imidazole-4-carboxamide. It functions in the pathway purine metabolism; IMP biosynthesis via de novo pathway; 5-formamido-1-(5-phospho-D-ribosyl)imidazole-4-carboxamide from 5-amino-1-(5-phospho-D-ribosyl)imidazole-4-carboxamide (10-formyl THF route): step 1/1. It participates in purine metabolism; IMP biosynthesis via de novo pathway; IMP from 5-formamido-1-(5-phospho-D-ribosyl)imidazole-4-carboxamide: step 1/1. This Vibrio atlanticus (strain LGP32) (Vibrio splendidus (strain Mel32)) protein is Bifunctional purine biosynthesis protein PurH.